The chain runs to 245 residues: tRNA pseudouridine synthase A (245 aa).

Catalysis depends on Asp52, which acts as the Nucleophile. Tyr111 serves as a coordination point for substrate.

This sequence belongs to the tRNA pseudouridine synthase TruA family. Homodimer.

It catalyses the reaction uridine(38/39/40) in tRNA = pseudouridine(38/39/40) in tRNA. Its function is as follows. Formation of pseudouridine at positions 38, 39 and 40 in the anticodon stem and loop of transfer RNAs. This chain is tRNA pseudouridine synthase A, found in Rickettsia rickettsii (strain Iowa).